The sequence spans 62 residues: MDKNRIEGAAKQVKGSVKEAIGRVTGDKSTELEGAAEKNIGKVQRKAGELADDVRDATKSTR.

Residues Leu32–Arg62 are disordered.

Belongs to the UPF0337 (CsbD) family.

The chain is UPF0337 protein XCC0070 from Xanthomonas campestris pv. campestris (strain ATCC 33913 / DSM 3586 / NCPPB 528 / LMG 568 / P 25).